A 520-amino-acid chain; its full sequence is Sodium-dependent dicarboxylate transporter SdcS (520 aa).

14 helical membrane passes run 30–50 (AGQLIGLILGPLLFLLTLLFF), 55–75 (LPWKGVYVLAITLWIATWWIT), 77–97 (AIPIAATSLLPIVLLPLGHIL), 104–124 (SEYGNDIIFLFLGGFILAIAM), 160–180 (SMFVSNTAAVMIMIPIGLAII), 207–227 (IGYAGTIGGLGTLIGTPPLII), 242–262 (FAKWMIVGIPTVIVLLGITWL), 298–318 (KVVQTIFVLASLLWITREFLL), 323–343 (VTSSVADGTIAIFISILLFII), 362–382 (ELPWGVLILFGGGLALAKGIS), 399–419 (GVSPILIVIVITIFVLFLTEV), 428–448 (MILPILATLSVAVGVHPLLLM), 452–472 (AMAANCAYMLPVGTPPNAIIF), and 491–511 (LISAIIIILVVYYVMPIVLGI).

The protein belongs to the SLC13A/DASS transporter (TC 2.A.47) family. NADC subfamily.

Its subcellular location is the cell membrane. Mediates the transport of the dicarboxylates fumarate, malate, and succinate across the cytoplasmic membrane via a Na(+)-electrochemical gradient. The polypeptide is Sodium-dependent dicarboxylate transporter SdcS (sdcS) (Staphylococcus aureus (strain NCTC 8325 / PS 47)).